Here is a 518-residue protein sequence, read N- to C-terminus: 12S seed storage globulin 1 (518 aa).

Residues 1 to 24 form the signal peptide; that stretch reads MATTRFPSLLFYSCIFLLCNGSMA. Disulfide bonds link C45–C78 and C121–C324. The Cupin type-1 1 domain occupies 50-240; sequence LQAFEPLRQV…ALGISQQAAQ (191 aa). The segment covering 281-295 has biased composition (low complexity); sequence QSQQEQSTQYQVGQS. Residues 281-311 form a disordered region; that stretch reads QSQQEQSTQYQVGQSPQYQEGQSTQYQSGQS. Residues 296 to 311 are compositionally biased toward polar residues; the sequence is PQYQEGQSTQYQSGQS. Residues 330 to 479 form the Cupin type-1 2 domain; that stretch reads QNIENPKRAD…AYRISRQESQ (150 aa). The disordered stretch occupies residues 496-518; it reads FAQTGSQSYQDEGESSSTEKASE.

The protein belongs to the 11S seed storage protein (globulins) family. Hexamer; each subunit is composed of an acidic and a basic chain derived from a single precursor and linked by a disulfide bond.

In terms of biological role, this is a seed storage protein. In Avena sativa (Oat), this protein is 12S seed storage globulin 1.